We begin with the raw amino-acid sequence, 343 residues long: Heat-inducible transcription repressor HrcA (343 aa).

Belongs to the HrcA family.

In terms of biological role, negative regulator of class I heat shock genes (grpE-dnaK-dnaJ and groELS operons). Prevents heat-shock induction of these operons. This chain is Heat-inducible transcription repressor HrcA, found in Bacillus cytotoxicus (strain DSM 22905 / CIP 110041 / 391-98 / NVH 391-98).